A 395-amino-acid polypeptide reads, in one-letter code: Phosphoglycerate kinase (395 aa).

Substrate contacts are provided by residues 21–23 (DLN), Arg-36, 59–62 (HLGR), Arg-114, and Arg-147. ATP is bound by residues Lys-198, Glu-320, and 346–349 (GGDT).

The protein belongs to the phosphoglycerate kinase family. In terms of assembly, monomer.

It localises to the cytoplasm. The catalysed reaction is (2R)-3-phosphoglycerate + ATP = (2R)-3-phospho-glyceroyl phosphate + ADP. It participates in carbohydrate degradation; glycolysis; pyruvate from D-glyceraldehyde 3-phosphate: step 2/5. This is Phosphoglycerate kinase from Nitrosospira multiformis (strain ATCC 25196 / NCIMB 11849 / C 71).